We begin with the raw amino-acid sequence, 362 residues long: Putative lipoprotein YdaJ (362 aa).

A signal peptide spans 1–20 (MRHVLIAVILFFLSIGLSAG). The N-palmitoyl cysteine moiety is linked to residue cysteine 21. Residue cysteine 21 is the site of S-diacylglycerol cysteine attachment.

Its subcellular location is the cell membrane. This Bacillus subtilis (strain 168) protein is Putative lipoprotein YdaJ (ydaJ).